The sequence spans 694 residues: Frizzled-2 (694 aa).

The N-terminal stretch at 1 to 22 (MRHNRLKVLILGLVLLLTSCRA) is a signal peptide. Topologically, residues 23–315 (DGPLHSADHG…GPFFSNDEKD (293 aa)) are extracellular. In terms of domain architecture, FZ spans 59–180 (DPNLRCEEIT…GDPDNLCMEQ (122 aa)). 5 disulfides stabilise this stretch: cysteine 64–cysteine 125, cysteine 72–cysteine 118, cysteine 109–cysteine 147, cysteine 136–cysteine 177, and cysteine 140–cysteine 164. Asparagine 78 is a glycosylation site (N-linked (GlcNAc...) asparagine). Residues 175-253 (NLCMEQPSYT…QGEKASGKEC (79 aa)) form a disordered region. Residues 187–224 (GSGGSSGGSGGSGSGSGSGGKRKQGGSGSGGSGAGGSS) are compositionally biased toward gly residues. Residue asparagine 288 is glycosylated (N-linked (GlcNAc...) asparagine). The chain crosses the membrane as a helical span at residues 316-336 (FAGLWIALWSGLCFCSTLMTL). The Cytoplasmic segment spans residues 337–352 (TTFIIDTERFKYPERP). Residues 353–373 (IVFLSACYFMVAVGYLSRNFL) form a helical membrane-spanning segment. The Extracellular segment spans residues 374-397 (QNEEIACDGLLLRESSTGPHSCTL). A helical membrane pass occupies residues 398-418 (VFLLTYFFGMASSIWWVILSF). Residues 419–439 (TWFLAAGLKWGNEAITKHSQY) lie on the Cytoplasmic side of the membrane. The chain crosses the membrane as a helical span at residues 440 to 460 (FHLAAWLIPTVQSVAVLLLSA). Residues 461 to 482 (VDGDPILGICYVGNLNPDHLKT) lie on the Extracellular side of the membrane. Residues 483–503 (FVLAPLFVYLVIGTTFLMAGF) form a helical membrane-spanning segment. At 504-534 (VSLFRIRSVIKQQGGVGAGVKADKLEKLMIR) the chain is on the cytoplasmic side. The chain crosses the membrane as a helical span at residues 535 to 555 (IGIFSVLYTVPATIVIGCYLY). Residues 556–584 (EAAYFEDWIKALACPCAQVKGPGKKPLYS) are Extracellular-facing. The chain crosses the membrane as a helical span at residues 585–605 (VLMLKYFMALAVGITSGVWIW). Residues 606 to 694 (SGKTLESWRR…VLKQPAASHV (89 aa)) are Cytoplasmic-facing. The Lys-Thr-X-X-X-Trp motif, mediates interaction with the PDZ domain of Dvl family members motif lies at 608–613 (KTLESW). The short motif at 692–694 (SHV) is the PDZ-binding element.

It belongs to the G-protein coupled receptor Fz/Smo family. As to quaternary structure, interacts with ATP6AP2.

It is found in the cell membrane. Receptor for Wnt proteins. Most of frizzled receptors are coupled to the beta-catenin canonical signaling pathway, which leads to the activation of disheveled proteins, inhibition of GSK-3 kinase, nuclear accumulation of beta-catenin and activation of Wnt target genes. A second signaling pathway involving PKC and calcium fluxes has been seen for some family members, but it is not yet clear if it represents a distinct pathway or if it can be integrated in the canonical pathway, as PKC seems to be required for Wnt-mediated inactivation of GSK-3 kinase. Both pathways seem to involve interactions with G-proteins. Required to coordinate the cytoskeletons of epidermal cells to produce a parallel array of cuticular hairs and bristles. This Drosophila melanogaster (Fruit fly) protein is Frizzled-2 (fz2).